The primary structure comprises 181 residues: Large ribosomal subunit protein uL5 (181 aa).

Belongs to the universal ribosomal protein uL5 family. In terms of assembly, part of the 50S ribosomal subunit; part of the 5S rRNA/L5/L18/L25 subcomplex. Contacts the 5S rRNA and the P site tRNA. Forms a bridge to the 30S subunit in the 70S ribosome.

In terms of biological role, this is one of the proteins that bind and probably mediate the attachment of the 5S RNA into the large ribosomal subunit, where it forms part of the central protuberance. In the 70S ribosome it contacts protein S13 of the 30S subunit (bridge B1b), connecting the 2 subunits; this bridge is implicated in subunit movement. Contacts the P site tRNA; the 5S rRNA and some of its associated proteins might help stabilize positioning of ribosome-bound tRNAs. The chain is Large ribosomal subunit protein uL5 from Colwellia psychrerythraea (strain 34H / ATCC BAA-681) (Vibrio psychroerythus).